Reading from the N-terminus, the 534-residue chain is NAD(P)H-quinone oxidoreductase chain 4 2 (534 aa).

The next 13 helical transmembrane spans lie at 6–26, 38–58, 93–113, 117–137, 138–158, 171–191, 210–230, 245–265, 279–299, 313–333, 335–355, 377–399, and 419–439; these read FPWLTTIILLPIVAALFIPLL, WYSLIVGLVDFILLVVAFWTS, LILLTGFISTLAMLAAWPVTF, FFYFLMLAMYGGQILVFAVQD, LLVFFFAWELELIPVYLLLAI, FILYTAGSSLFILVASLAMAF, IGFQLLLYAGFLIAYGVKLPI, TAPVHMLLAGILLKMGGYALF, FAPILVLLGVVNILYAALTSF, ISHMGFVLIGLGSFTQLGLSG, MLQMVSHGLIGASLFFLVGAT, MFAMWTTCAMASLALPGMSGFVA, and VVVISLAAIGVILTPIYLLSM.

It belongs to the complex I subunit 4 family.

The protein localises to the cellular thylakoid membrane. The enzyme catalyses a plastoquinone + NADH + (n+1) H(+)(in) = a plastoquinol + NAD(+) + n H(+)(out). It carries out the reaction a plastoquinone + NADPH + (n+1) H(+)(in) = a plastoquinol + NADP(+) + n H(+)(out). In terms of biological role, NDH-1 shuttles electrons from NAD(P)H, via FMN and iron-sulfur (Fe-S) centers, to quinones in the respiratory chain. The immediate electron acceptor for the enzyme in this species is believed to be plastoquinone. Couples the redox reaction to proton translocation (for every two electrons transferred, four hydrogen ions are translocated across the cytoplasmic membrane), and thus conserves the redox energy in a proton gradient. The protein is NAD(P)H-quinone oxidoreductase chain 4 2 of Synechococcus elongatus (strain ATCC 33912 / PCC 7942 / FACHB-805) (Anacystis nidulans R2).